The primary structure comprises 199 residues: Protein CPL1 (199 aa).

Residues 1-30 (MFSIPPSVRRLVFLFLIAAPLLSIVLPVAA) form the signal peptide. A disordered region spans residues 34–58 (GVDPPSKLQPRAPQPSRRMGATKRS). An N-linked (GlcNAc...) asparagine glycan is attached at asparagine 148.

It is found in the secreted. Virulence factor which promotes fungal virulence by enhancing type 2 inflammation in the mouse host. Likely binds mouse Tlr4 independently of Ly96/Md2 and activates Tlr4 signaling to drive Stat3 phosphorylation in interstitial macrophages, which promotes the initial induction of Arg1/arginase-1 and increases macrophage sensitivity to Il4 signaling. The polypeptide is Protein CPL1 (Cryptococcus neoformans var. grubii serotype A (strain H99 / ATCC 208821 / CBS 10515 / FGSC 9487) (Filobasidiella neoformans var. grubii)).